Here is a 290-residue protein sequence, read N- to C-terminus: 4-diphosphocytidyl-2-C-methyl-D-erythritol kinase (290 aa).

K13 is an active-site residue. 93–103 is an ATP binding site; it reads PVQAGLGGGSA. Residue D135 is part of the active site.

This sequence belongs to the GHMP kinase family. IspE subfamily.

It catalyses the reaction 4-CDP-2-C-methyl-D-erythritol + ATP = 4-CDP-2-C-methyl-D-erythritol 2-phosphate + ADP + H(+). The protein operates within isoprenoid biosynthesis; isopentenyl diphosphate biosynthesis via DXP pathway; isopentenyl diphosphate from 1-deoxy-D-xylulose 5-phosphate: step 3/6. In terms of biological role, catalyzes the phosphorylation of the position 2 hydroxy group of 4-diphosphocytidyl-2C-methyl-D-erythritol. This Desulfitobacterium hafniense (strain Y51) protein is 4-diphosphocytidyl-2-C-methyl-D-erythritol kinase.